The chain runs to 938 residues: AP-4 complex subunit epsilon (938 aa).

HEAT repeat units follow at residues 118 to 153, 154 to 190, 192 to 227, 234 to 272, 321 to 358, 359 to 395, 397 to 431, 454 to 495, 517 to 556, and 562 to 601; these read DLIILIVNTIQKDLRSDNYLVVCAALNAICRLINEE, TIPAVLPQVVELLNHQKEAVRKKAIMALHRFHRKSPS, VSHLVSNFRKRLCDNDPGVMGATLCPLFDLISEDVN, SSFVSILKQVTERRLPKSYDYHQMPAPFIQIKLLKIMAL, KLLEAAADAISKFLKSDSHNLKYMGIDGLGRLIKISPD, IAEQHQLAVIDCLEDPDDTLKRKTFELLYKMTKSSNV, VIVDRMIDYMISINDNHYKTEIASRCVELAEQFAP, KVAH…EPKL, YSASYISGKLCDVADAYSSDETVKGYAVSALMKIYAFEIA, and DVLPECQSLIEELLASHSTDLQQRAYELQALLALDARAVE. 4 disordered regions span residues 690 to 712, 725 to 867, 880 to 912, and 919 to 938; these read EPSYYSESHQPISTSLVSERESS, WGRP…VMGL, VDSLLSELSDSSKGNSRTYQPQTSKGPNTKEAL, and RQMGVNPTSQNPTLFKDLLG. Residues 694–706 are compositionally biased toward polar residues; it reads YSESHQPISTSLV. The segment covering 728 to 744 has biased composition (low complexity); sequence PSYQSTTAASSTTPQAA. Positions 764 to 779 are enriched in basic and acidic residues; sequence SSYEPKKPEIDPEKQR. Polar residues predominate over residues 808 to 821; that stretch reads ANKTATVPKENQTP. Low complexity-rich tracts occupy residues 853-863 and 880-891; these read DSSSQDGGSSD and VDSLLSELSDSS. The stretch at 874–911 is one HEAT 11 repeat; sequence VTTTTSVDSLLSELSDSSKGNSRTYQPQTSKGPNTKEA. A compositionally biased stretch (polar residues) spans 892 to 906; sequence KGNSRTYQPQTSKGP.

This sequence belongs to the adaptor complexes large subunit family. In terms of assembly, adaptor protein complex 4 (AP-4) is a heterotetramer composed of two large adaptins (epsilon-type subunit and beta-type subunit), a medium adaptin (mu-type subunit) and a small adaptin (sigma-type subunit).

Its subcellular location is the golgi apparatus. The protein localises to the trans-Golgi network. The protein resides in the membrane. It is found in the coated pit. Functionally, subunit of novel type of clathrin- or non-clathrin-associated protein coat involved in targeting proteins from the trans-Golgi network (TGN) to the endosomal-lysosomal system. This Arabidopsis thaliana (Mouse-ear cress) protein is AP-4 complex subunit epsilon.